Reading from the N-terminus, the 499-residue chain is Thioredoxin reductase 1, cytoplasmic (499 aa).

FAD-binding positions include Ile-18–Gly-23, Asp-42–Phe-43, Thr-58–Cys-59, and Gly-63–Lys-67. A disulfide bridge links Cys-59 with Cys-64. The residue at position 68 (Lys-68) is an N6-succinyllysine. At Tyr-131 the chain carries Phosphotyrosine. Residues Tyr-131 to Gly-132 and Thr-161 contribute to the FAD site. Residues Arg-166, Ala-198 to Glu-204, Arg-221 to Ser-222, Arg-226, Arg-226 to Phe-228, Val-291 to Arg-293, and Lys-315 contribute to the NADP(+) site. Tyr-200 is an FAD binding site. Residues Asp-334, Glu-341–Thr-343, and His-472 contribute to the FAD site. Glu-341 is an NADP(+) binding site. The Proton acceptor role is filled by His-472. A cross-link (cysteinyl-selenocysteine (Cys-Sec)) is located at residues Cys-497–Sec-498. Position 498 (Sec-498) is a non-standard amino acid, selenocysteine.

This sequence belongs to the class-I pyridine nucleotide-disulfide oxidoreductase family. In terms of assembly, homodimer. FAD serves as cofactor. Post-translationally, ISGylated.

Its subcellular location is the cytoplasm. The enzyme catalyses [thioredoxin]-dithiol + NADP(+) = [thioredoxin]-disulfide + NADPH + H(+). The catalysed reaction is H2O2 + NADPH + H(+) = NADP(+) + 2 H2O. Its function is as follows. Reduces disulfideprotein thioredoxin (Trx) to its dithiol-containing form. Homodimeric flavoprotein involved in the regulation of cellular redox reactions, growth and differentiation. Contains a selenocysteine residue at the C-terminal active site that is essential for catalysis. Also has reductase activity on hydrogen peroxide (H2O2). The protein is Thioredoxin reductase 1, cytoplasmic of Rattus norvegicus (Rat).